A 680-amino-acid chain; its full sequence is Zinc finger protein 263 (680 aa).

A Glycyl lysine isopeptide (Lys-Gly) (interchain with G-Cter in SUMO2) cross-link involves residue K19. One can recognise an SCAN box domain in the interval H43 to L125. Positions L147–R191 are disordered. Residue K159 forms a Glycyl lysine isopeptide (Lys-Gly) (interchain with G-Cter in SUMO2) linkage. A phosphoserine mark is found at S168 and S180. Glycyl lysine isopeptide (Lys-Gly) (interchain with G-Cter in SUMO2) cross-links involve residues K286, K300, and K376. 5 C2H2-type zinc fingers span residues H378–H400, H434–H456, F462–H484, Y490–H512, and Y518–H540. Glycyl lysine isopeptide (Lys-Gly) (interchain with G-Cter in SUMO2) cross-links involve residues K570 and K579. 4 consecutive C2H2-type zinc fingers follow at residues F572–H594, Y600–H622, Y628–H650, and Y656–H678.

Belongs to the krueppel C2H2-type zinc-finger protein family. Interacts with a number of proteins involved in chromatin modification and transcriptional corepression including DNMT1, DNMT3A, HDAC2, PHF8, TRIM28/KAP1, SETDB1, EZH2, UHRF1, CBX3/HP1-gamma, and CBX5/HP1-alpha; recruits these proteins to the SIX3 promoter region, leading to SIX3 transcriptional repression. Interacts with MAPK3/ERK1 and MAPK1/ERK2. In terms of processing, ubiquitinated, leading to proteasomal degradation. In terms of tissue distribution, expressed in Purkinje cells in the brain (at protein level).

It is found in the nucleus. In terms of biological role, transcription factor that binds to the consensus sequence 5'-TCCTCCC-3' and acts as a transcriptional repressor. Binds to the promoter region of SIX3 and recruits other proteins involved in chromatin modification and transcriptional corepression, resulting in methylation of the promoter and transcriptional repression. Acts as a transcriptional repressor of HS3ST1 and HS3ST3A1 via binding to gene promoter regions. The polypeptide is Zinc finger protein 263 (Mus musculus (Mouse)).